A 199-amino-acid chain; its full sequence is MSYLGVGLSPVNVAGTKMKLMDRKVRLTELILRCSVCALALVAAILIATDTQVKEIFTIQKKAKYTDMKALVFLVVVNGIAAAYSLLHMVRCVVGMMKGSVLFSKPLAWAIFSGDQAIAYLTVAGVAAAAQSAAFAKLGEPELQWMKICTIYGKFCNQVGEGIATALLASIGMVLISSISAFALFRLYGGNKAQQGSRW.

Over 1-26 (MSYLGVGLSPVNVAGTKMKLMDRKVR) the chain is Cytoplasmic. A helical membrane pass occupies residues 27–47 (LTELILRCSVCALALVAAILI). The Extracellular portion of the chain corresponds to 48–69 (ATDTQVKEIFTIQKKAKYTDMK). Residues 70–90 (ALVFLVVVNGIAAAYSLLHMV) traverse the membrane as a helical segment. Residues 91 to 106 (RCVVGMMKGSVLFSKP) lie on the Cytoplasmic side of the membrane. A helical transmembrane segment spans residues 107–127 (LAWAIFSGDQAIAYLTVAGVA). Topologically, residues 128–164 (AAAQSAAFAKLGEPELQWMKICTIYGKFCNQVGEGIA) are extracellular. Residues 165-185 (TALLASIGMVLISSISAFALF) form a helical membrane-spanning segment. Residues 186–199 (RLYGGNKAQQGSRW) are Cytoplasmic-facing.

The protein belongs to the Casparian strip membrane proteins (CASP) family. As to quaternary structure, homodimer and heterodimers.

The protein localises to the cell membrane. This chain is CASP-like protein 2B1, found in Eutrema halophilum (Salt cress).